A 173-amino-acid polypeptide reads, in one-letter code: Putative metal-dependent hydrolase BT9727_2476 (173 aa).

Residues His-65, His-156, and His-160 each contribute to the Zn(2+) site.

The protein belongs to the metal hydrolase YfiT family. As to quaternary structure, homodimer. The cofactor is Zn(2+).

It localises to the cytoplasm. Functionally, possible metal-dependent hydrolase. The polypeptide is Putative metal-dependent hydrolase BT9727_2476 (Bacillus thuringiensis subsp. konkukian (strain 97-27)).